A 342-amino-acid polypeptide reads, in one-letter code: S-adenosylmethionine:tRNA ribosyltransferase-isomerase (342 aa).

Belongs to the QueA family. Monomer.

It is found in the cytoplasm. It carries out the reaction 7-aminomethyl-7-carbaguanosine(34) in tRNA + S-adenosyl-L-methionine = epoxyqueuosine(34) in tRNA + adenine + L-methionine + 2 H(+). It functions in the pathway tRNA modification; tRNA-queuosine biosynthesis. Functionally, transfers and isomerizes the ribose moiety from AdoMet to the 7-aminomethyl group of 7-deazaguanine (preQ1-tRNA) to give epoxyqueuosine (oQ-tRNA). This Sulfurimonas denitrificans (strain ATCC 33889 / DSM 1251) (Thiomicrospira denitrificans (strain ATCC 33889 / DSM 1251)) protein is S-adenosylmethionine:tRNA ribosyltransferase-isomerase.